The chain runs to 274 residues: Light-independent protochlorophyllide reductase iron-sulfur ATP-binding protein (274 aa).

ATP contacts are provided by residues 12–17 (GIGKST) and K41. Residue S16 participates in Mg(2+) binding. The [4Fe-4S] cluster site is built by C97 and C131.

The protein belongs to the NifH/BchL/ChlL family. As to quaternary structure, homodimer. Protochlorophyllide reductase is composed of three subunits; BchL, BchN and BchB. It depends on [4Fe-4S] cluster as a cofactor.

It carries out the reaction chlorophyllide a + oxidized 2[4Fe-4S]-[ferredoxin] + 2 ADP + 2 phosphate = protochlorophyllide a + reduced 2[4Fe-4S]-[ferredoxin] + 2 ATP + 2 H2O. Its pathway is porphyrin-containing compound metabolism; bacteriochlorophyll biosynthesis (light-independent). Component of the dark-operative protochlorophyllide reductase (DPOR) that uses Mg-ATP and reduced ferredoxin to reduce ring D of protochlorophyllide (Pchlide) to form chlorophyllide a (Chlide). This reaction is light-independent. The L component serves as a unique electron donor to the NB-component of the complex, and binds Mg-ATP. This is Light-independent protochlorophyllide reductase iron-sulfur ATP-binding protein from Chloroherpeton thalassium (strain ATCC 35110 / GB-78).